Here is a 543-residue protein sequence, read N- to C-terminus: ABC transport system permease protein p69 (543 aa).

Helical transmembrane passes span 18-38 (IWYWKLLIIIAVLAIVIYSWI), 78-98 (AFFVTGGSFLGFIFAILFSYW), 115-135 (ITIVLRAFPVLLFGFLFSNLF), 141-161 (ATLTISWFSFLWNTKYITTFF), 211-231 (TLLSIFGIGGIGQLIVDPLSI), 237-257 (LVLIPLVVLITFLIFIEVVVF), 288-308 (IIFILFIVVLISLSLANLVTI), 354-374 (ISLISLVVIFSILFGFISCNL), 379-399 (FSISFKILLLFVRVVPSILLF), 413-433 (IILVLLINHGSSYGQLMSINF), 482-502 (LILFGSFGGSIIGSRITNFFE), and 510-530 (GSVTIPLMVYLIAIEIIFLSV). In terms of domain architecture, ABC transmembrane type-1 spans 74-256 (LAQTAFFVTG…TFLIFIEVVV (183 aa)).

It belongs to the binding-protein-dependent transport system permease family.

Its subcellular location is the cell membrane. Functionally, probably part of a high-affinity transport system. The chain is ABC transport system permease protein p69 (p69) from Mycoplasma genitalium (strain ATCC 33530 / DSM 19775 / NCTC 10195 / G37) (Mycoplasmoides genitalium).